The following is a 139-amino-acid chain: Exodeoxyribonuclease 7 small subunit (139 aa).

Disordered regions lie at residues 1–26 (MAKK…LGDF) and 82–139 (DAEG…EDDE). The segment covering 130-139 (ADLDSAEDDE) has biased composition (acidic residues).

Belongs to the XseB family. As to quaternary structure, heterooligomer composed of large and small subunits.

The protein resides in the cytoplasm. The catalysed reaction is Exonucleolytic cleavage in either 5'- to 3'- or 3'- to 5'-direction to yield nucleoside 5'-phosphates.. In terms of biological role, bidirectionally degrades single-stranded DNA into large acid-insoluble oligonucleotides, which are then degraded further into small acid-soluble oligonucleotides. This is Exodeoxyribonuclease 7 small subunit from Rhodopirellula baltica (strain DSM 10527 / NCIMB 13988 / SH1).